We begin with the raw amino-acid sequence, 280 residues long: Mevalonyl-coenzyme A hydratase SIDH (280 aa).

The short motif at 278 to 280 (SKL) is the PTS1-type peroxisomal targeting signal element.

Belongs to the enoyl-CoA hydratase/isomerase family.

The protein resides in the peroxisome. It participates in siderophore biosynthesis. In terms of biological role, mevalonyl-coenzyme A hydratase; part of the gene cluster that mediates the biosynthesis of at least 11 siderophores, including beauverichelin A, dimerumic acid (DA), Na-dimethyl coprogen (NADC), eleutherazine B, ferricrocin (FC), fusarinine A, fusarinine C (FsC), metachelin A, mevalonolactone, rhodotorulic acid (RA) and tenellin. This cocktail of siderophores for iron metabolism is essential for virulence, and more specifically for the fungal virulence in penetrating through the host cuticle. Siderophore synthesis is also involved in conidial germination under iron-deficient conditions. For biosynthesis of fusarinine C, the transacylase SIDF transfers anhydromevalonyl to N(5)-hydroxyornithine. The required anhydromevalonyl-CoA moiety is derived from mevalonate by CoA ligation and dehydration catalyzed by SIDI and sidH respectively. SIDH is not essential for siderophore production, probably due to functional redundancy of this protein family, as there are 15 homologs of SIDH in B.bassiana. The chain is Mevalonyl-coenzyme A hydratase SIDH from Beauveria bassiana (strain ARSEF 2860) (White muscardine disease fungus).